The primary structure comprises 459 residues: Uterine milk protein (459 aa).

The first 25 residues, 1–25, serve as a signal peptide directing secretion; it reads MSHGRMNLALSLVFILCGLFNSIFC. The N-linked (GlcNAc...) asparagine glycan is linked to Asn-268.

Belongs to the serpin family. UTMP subfamily.

The polypeptide is Uterine milk protein (Bos taurus (Bovine)).